Consider the following 330-residue polypeptide: N-acetyl-gamma-glutamyl-phosphate reductase (330 aa).

Residue cysteine 155 is part of the active site.

The protein belongs to the NAGSA dehydrogenase family. Type 1 subfamily.

It localises to the cytoplasm. It carries out the reaction N-acetyl-L-glutamate 5-semialdehyde + phosphate + NADP(+) = N-acetyl-L-glutamyl 5-phosphate + NADPH + H(+). It participates in amino-acid biosynthesis; L-arginine biosynthesis; N(2)-acetyl-L-ornithine from L-glutamate: step 3/4. Catalyzes the NADPH-dependent reduction of N-acetyl-5-glutamyl phosphate to yield N-acetyl-L-glutamate 5-semialdehyde. This is N-acetyl-gamma-glutamyl-phosphate reductase from Shewanella halifaxensis (strain HAW-EB4).